The chain runs to 299 residues: Biotin synthase (299 aa).

Positions 22–252 constitute a Radical SAM core domain; sequence TSNLKLDLCS…NVTIKIAAGR (231 aa). Residues Cys-40, Cys-44, and Cys-47 each coordinate [4Fe-4S] cluster. Residues Cys-116, Cys-176, and Lys-247 each coordinate [2Fe-2S] cluster.

This sequence belongs to the radical SAM superfamily. Biotin synthase family. In terms of assembly, homodimer. It depends on [4Fe-4S] cluster as a cofactor. [2Fe-2S] cluster serves as cofactor.

It catalyses the reaction (4R,5S)-dethiobiotin + (sulfur carrier)-SH + 2 reduced [2Fe-2S]-[ferredoxin] + 2 S-adenosyl-L-methionine = (sulfur carrier)-H + biotin + 2 5'-deoxyadenosine + 2 L-methionine + 2 oxidized [2Fe-2S]-[ferredoxin]. The protein operates within cofactor biosynthesis; biotin biosynthesis; biotin from 7,8-diaminononanoate: step 2/2. In terms of biological role, catalyzes the conversion of dethiobiotin (DTB) to biotin by the insertion of a sulfur atom into dethiobiotin via a radical-based mechanism. This Thermotoga petrophila (strain ATCC BAA-488 / DSM 13995 / JCM 10881 / RKU-1) protein is Biotin synthase.